A 508-amino-acid polypeptide reads, in one-letter code: Pyruvate kinase (508 aa).

Arg56 contacts substrate. Residues Asn58, Ser60, Asp90, and Thr91 each coordinate K(+). 58–61 (NFSH) contributes to the ATP binding site. Positions 97 and 185 each coordinate ATP. Glu251 serves as a coordination point for Mg(2+). Residues Gly274, Asp275, and Thr307 each contribute to the substrate site. Asp275 contributes to the Mg(2+) binding site.

It belongs to the pyruvate kinase family. Homotetramer. The cofactor is Mg(2+). K(+) is required as a cofactor.

The catalysed reaction is pyruvate + ATP = phosphoenolpyruvate + ADP + H(+). Its pathway is carbohydrate degradation; glycolysis; pyruvate from D-glyceraldehyde 3-phosphate: step 5/5. Regulated by phosphoenolpyruvate substrate and is allosterically activated by ribose-5-phosphate, AMP and other nucleoside monophosphates but not by fructose-1,6-bisphosphate. This chain is Pyruvate kinase (pyk), found in Mycoplasma pneumoniae (strain ATCC 29342 / M129 / Subtype 1) (Mycoplasmoides pneumoniae).